The sequence spans 422 residues: MSDMFRKSVLNKLPHLPPTRAPWADESEPIEEIDEEDEQLDGIGEFKPATMGPSKHDTQDYSPLSASTFFAQAAEVQPPSTPCTFRVYLTPPNLSIASTNAGTPPGPSGLRTQQQTNRHGTYLVCHHGGGASGLGFAPLAREVKAKGNGEMGVLAFDCRGHGKTSTSDPNLELDLSHDTLLSDFMAIIEMMFPDPKESPSLILLGHSMGAAPVVSAAPELQKKGYTIPGVVVLDVVEGTAVESLPLMKSVLSKRPESFRSVIDAIYWHVTSNSIRNVESARVSVPHIIVPAPSSSSSDPSANPGGKQVWRTNLVGTEPYWEGWYKGLSQRFLRTKCARLLVLAGQERLDRELMVGQMQGKFQLEVMSDVGHYLHEDNPAGLAATLITFWHRNTRVLVLPPKIGAPGPGARGGPVEVKQVGQQ.

A disordered region spans residues 1 to 27 (MSDMFRKSVLNKLPHLPPTRAPWADES). Catalysis depends on residues Ser207, Asp234, and His371.

The protein belongs to the AB hydrolase superfamily.

It catalyses the reaction [phosphatase 2A protein]-C-terminal L-leucine methyl ester + H2O = [phosphatase 2A protein]-C-terminal L-leucine + methanol + H(+). Its function is as follows. Demethylates proteins that have been reversibly carboxymethylated. Demethylates the phosphatase PP2A catalytic subunit. The protein is Protein phosphatase methylesterase 1 (PPE1) of Cryptococcus neoformans var. neoformans serotype D (strain B-3501A) (Filobasidiella neoformans).